The sequence spans 67 residues: Medusin-PT (67 aa).

Positions 1–22 (MAFLKKSLFLVFFLGFVSLSIC) are cleaved as a signal peptide. Positions 23–48 (EEEKRETDEKENEQEDDREERSEEKR) are excised as a propeptide. The tract at residues 25-46 (EKRETDEKENEQEDDREERSEE) is disordered. Acidic residues predominate over residues 31 to 40 (EKENEQEDDR). A Leucine amide modification is found at leucine 66.

This sequence belongs to the frog skin active peptide (FSAP) family. Medusin subfamily. In the synthetic mutant medusin-PT1a [T58K], the Leu-50 has been modified in a D-amino acid. In medusin-PT1a, there is an increase in antimicrobial activity, and an increase in hemolytic activity. It is more potent against S.aureus and gains activity against MRSA, E.faecalis, E.coli, P.aeruginosa and C.albicans. There is an important increase in both biofilm inhibition and biofilm eradication. As to expression, expressed by the skin glands.

The protein resides in the secreted. Its subcellular location is the target cell membrane. Antimicrobial peptide with activity against Gram-positive bacteria S.epidermidis ATCC 12228 (MIC=50 uM) and S.aureus (MIC=64 ug/ml and MBC=128 ug/ml). Not active against some Gram-positive bacteria (methicillin-resistant S.aureus (MRSA), E.faecalis), Gram-negative bacterium E.coli ATCC 25922 and fungus C.albicans at concentrations up to 100 uM. Can only slightly inhibit the formation of biofilm by S.aureus (minimal biofilm inhibitionconcentration MBIC=512 ug/ml, minimal biofilm eradication concentration MBEC&gt;512 ug/ml). Has an anti-inflammatory effect, since it inhibits the production of the pro-inflammatory cytokines TNF-alpha and IL-1beta. Has high activity of stimulation of insulin release, which may protect the species from being eaten by predators by causing fatal hypoglycemia. Is not cytotoxic to cancer line cells. Shows very low hemolysis on horse erythrocytes and moderate hemolysis on mouse erythrocytes. The chain is Medusin-PT from Phyllomedusa tarsius (Brownbelly leaf frog).